The chain runs to 612 residues: Glutamine--fructose-6-phosphate aminotransferase [isomerizing] (612 aa).

Catalysis depends on Cys-2, which acts as the Nucleophile; for GATase activity. Residues 2 to 220 (CGIVGAIRAH…DGDIALLASD (219 aa)) enclose the Glutamine amidotransferase type-2 domain. SIS domains lie at 288-428 (AKSV…VRGL) and 461-602 (WAQQ…VDKP). The active-site For Fru-6P isomerization activity is the Lys-607.

As to quaternary structure, homodimer.

It is found in the cytoplasm. The enzyme catalyses D-fructose 6-phosphate + L-glutamine = D-glucosamine 6-phosphate + L-glutamate. In terms of biological role, catalyzes the first step in hexosamine metabolism, converting fructose-6P into glucosamine-6P using glutamine as a nitrogen source. The sequence is that of Glutamine--fructose-6-phosphate aminotransferase [isomerizing] from Neisseria meningitidis serogroup A / serotype 4A (strain DSM 15465 / Z2491).